The sequence spans 338 residues: Nucleoid-associated protein CGSHiGG_07705 (338 aa).

It belongs to the YejK family.

The protein resides in the cytoplasm. Its subcellular location is the nucleoid. The chain is Nucleoid-associated protein CGSHiGG_07705 from Haemophilus influenzae (strain PittGG).